Here is a 336-residue protein sequence, read N- to C-terminus: tRNA N6-adenosine threonylcarbamoyltransferase (336 aa).

Residues histidine 114 and histidine 118 each coordinate Fe cation. Substrate is bound by residues 136 to 140 (LVSGG), aspartate 169, glycine 182, aspartate 186, and asparagine 275. Aspartate 302 is a Fe cation binding site.

Belongs to the KAE1 / TsaD family. Requires Fe(2+) as cofactor.

Its subcellular location is the cytoplasm. The enzyme catalyses L-threonylcarbamoyladenylate + adenosine(37) in tRNA = N(6)-L-threonylcarbamoyladenosine(37) in tRNA + AMP + H(+). In terms of biological role, required for the formation of a threonylcarbamoyl group on adenosine at position 37 (t(6)A37) in tRNAs that read codons beginning with adenine. Is involved in the transfer of the threonylcarbamoyl moiety of threonylcarbamoyl-AMP (TC-AMP) to the N6 group of A37, together with TsaE and TsaB. TsaD likely plays a direct catalytic role in this reaction. The polypeptide is tRNA N6-adenosine threonylcarbamoyltransferase (Streptococcus agalactiae serotype V (strain ATCC BAA-611 / 2603 V/R)).